Here is a 591-residue protein sequence, read N- to C-terminus: Protein kinase C zeta type (591 aa).

In terms of domain architecture, PB1 spans 15 to 98 (RVRLKAHYSG…DGLILHVFPS (84 aa)). Positions 79–145 (AFRLAGQHRD…KRFNRRAYCG (67 aa)) are interaction with SQSTM1. The Phorbol-ester/DAG-type zinc finger occupies 130-180 (GHLFQAKRFNRRAYCGQCSERIWGLARQGYRCINCKLLVHKRCHGLVPLTC). In terms of domain architecture, Protein kinase spans 251-517 (FDLIRVIGRG…FSDIKSHAFF (267 aa)). Residues 257–265 (IGRGSYAKV) and Lys-280 each bind ATP. Asp-375 acts as the Proton acceptor in catalysis. Thr-409 bears the Phosphothreonine; by PDPK1 and PI3K mark. One can recognise an AGC-kinase C-terminal domain in the interval 518–589 (RSIDWDLLEK…INPLLLSTEE (72 aa)). Thr-559 carries the post-translational modification Phosphothreonine. Residue Ser-590 is modified to Phosphoserine.

It belongs to the protein kinase superfamily. AGC Ser/Thr protein kinase family. PKC subfamily. Interacts with PARD6A, PARD6B and PARD6G. Part of a complex with PARD3, PARD6A or PARD6B or PARD6G and CDC42 or RAC1. Interacts with ADAP1/CENTA1. Interacts directly with SQSTM1. Forms a ternary complex with SQSTM1 and KCNAB2. Forms another ternary complex with SQSTM1 and GABRR3. Forms a complex with SQSTM1 and MAP2K5. Interacts (via the protein kinase domain) with WWC1. Forms a tripartite complex with WWC1 and DDR1, but predominantly in the absence of collagen. Component of the Par polarity complex, composed of at least phosphorylated PRKCZ, PARD3 and TIAM1. Interacts with PDPK1 (via N-terminal region). Interacts with WDFY2 (via WD repeats 1-3). Interacts with VAMP2. Forms a complex with WDFY2 and VAMP2. Interacts with APPL1. Interacts with WWC1, WWC2 and WWC3. In terms of processing, CDH5 is required for its phosphorylation at Thr-409. Phosphorylated by protein kinase PDPK1; phosphorylation is inhibited by the apoptotic C-terminal cleavage product of PKN2. Phosphorylation at Thr-409 by PI3K activates the kinase.

It is found in the cytoplasm. Its subcellular location is the endosome. It localises to the cell junction. The protein localises to the membrane. It catalyses the reaction L-seryl-[protein] + ATP = O-phospho-L-seryl-[protein] + ADP + H(+). The enzyme catalyses L-threonyl-[protein] + ATP = O-phospho-L-threonyl-[protein] + ADP + H(+). Atypical PKCs (PRKCI and PRKCZ) exhibit an elevated basal enzymatic activity (that may be due to the interaction with SMG1 or SQSTM1) and are not regulated by diacylglycerol, phosphatidylserine, phorbol esters or calcium ions. Two specific sites, Thr-409 (activation loop of the kinase domain) and Thr-559 (turn motif), need to be phosphorylated for its full activation. Phosphatidylinositol 3,4,5-trisphosphate might be a physiological activator. In terms of biological role, calcium- and diacylglycerol-independent serine/threonine-protein kinase that functions in phosphatidylinositol 3-kinase (PI3K) pathway and mitogen-activated protein (MAP) kinase cascade, and is involved in NF-kappa-B activation, mitogenic signaling, cell proliferation, cell polarity, inflammatory response and maintenance of long-term potentiation (LTP). Upon lipopolysaccharide (LPS) treatment in macrophages, or following mitogenic stimuli, functions downstream of PI3K to activate MAP2K1/MEK1-MAPK1/ERK2 signaling cascade independently of RAF1 activation. Required for insulin-dependent activation of AKT3, but may function as an adapter rather than a direct activator. Upon insulin treatment may act as a downstream effector of PI3K and contribute to the activation of translocation of the glucose transporter SLC2A4/GLUT4 and subsequent glucose transport in adipocytes. In EGF-induced cells, binds and activates MAP2K5/MEK5-MAPK7/ERK5 independently of its kinase activity and can activate JUN promoter through MEF2C. Through binding with SQSTM1/p62, functions in interleukin-1 signaling and activation of NF-kappa-B with the specific adapters RIPK1 and TRAF6. Participates in TNF-dependent transactivation of NF-kappa-B by phosphorylating and activating IKBKB kinase, which in turn leads to the degradation of NF-kappa-B inhibitors. In migrating astrocytes, forms a cytoplasmic complex with PARD6A and is recruited by CDC42 to function in the establishment of cell polarity along with the microtubule motor and dynein. In association with FEZ1, stimulates neuronal differentiation in PC12 cells. In the inflammatory response, is required for the T-helper 2 (Th2) differentiation process, including interleukin production, efficient activation of JAK1 and the subsequent phosphorylation and nuclear translocation of STAT6. May be involved in development of allergic airway inflammation (asthma), a process dependent on Th2 immune response. In the NF-kappa-B-mediated inflammatory response, can relieve SETD6-dependent repression of NF-kappa-B target genes by phosphorylating the RELA subunit at 'Ser-311'. Phosphorylates VAMP2 in vitro. Phosphorylates and activates LRRK1, which phosphorylates RAB proteins involved in intracellular trafficking. This chain is Protein kinase C zeta type (PRKCZ), found in Oryctolagus cuniculus (Rabbit).